The following is a 92-amino-acid chain: Small ribosomal subunit protein uS19 (92 aa).

Belongs to the universal ribosomal protein uS19 family.

In terms of biological role, protein S19 forms a complex with S13 that binds strongly to the 16S ribosomal RNA. In Polaromonas sp. (strain JS666 / ATCC BAA-500), this protein is Small ribosomal subunit protein uS19.